The chain runs to 257 residues: Putative hydro-lyase Bphy_2364 (257 aa).

Belongs to the D-glutamate cyclase family.

This is Putative hydro-lyase Bphy_2364 from Paraburkholderia phymatum (strain DSM 17167 / CIP 108236 / LMG 21445 / STM815) (Burkholderia phymatum).